Consider the following 612-residue polypeptide: Citryl-spermidine/3,4-dihydroxybenzoyl-citryl-spermidine:spermidine ligase (612 aa).

Residues 282–284 (SMR), K298, R310, Y390, and E461 contribute to the ATP site.

It belongs to the IucA/IucC family. As to quaternary structure, homodimer.

The enzyme catalyses N(8)-citryl-spermidine + spermidine + ATP = N(8),N'(8)-citryl-bis(spermidine) + AMP + diphosphate + H(+). It catalyses the reaction N(1)-(3,4-dihydroxybenzoyl)-N(8)-citryl-spermidine + spermidine + ATP = N(1)-(3,4-dihydroxybenzoyl)-N(8),N'(8)-citryl-bis(spermidine) + AMP + diphosphate + H(+). Its pathway is siderophore biosynthesis; petrobactin biosynthesis. Its function is as follows. Involved in the biosynthesis of petrobactin, a catecholate siderophore that functions in both iron acquisition and virulence. Catalyzes the ATP-dependent condensation of spermidine with N(8)-citryl-spermidine or N(1)-(3,4-dihydroxbenzoyl)-N(8)-citryl-spermidine, two intermediates in petrobactin biosynthesis pathway. The polypeptide is Citryl-spermidine/3,4-dihydroxybenzoyl-citryl-spermidine:spermidine ligase (Bacillus anthracis).